Here is a 317-residue protein sequence, read N- to C-terminus: Melanocyte-stimulating hormone receptor (317 aa).

Over 1-37 (MPVLGSQRRLLGSLNCTPPATFPLMLAPNRTGPQCLE) the chain is Extracellular. Asparagine 29 carries N-linked (GlcNAc...) asparagine glycosylation. A helical transmembrane segment spans residues 38 to 63 (VSIPNGLFLSLGLVSLVENVLVVAAI). The Cytoplasmic segment spans residues 64–72 (AKNSNLHSP). A helical membrane pass occupies residues 73-93 (MYYFICCLAVSDLLVSVSNVL). Residues 94–118 (ETAVMLLLEAGALAARAAVVQQLDN) are Extracellular-facing. The helical transmembrane segment at 119–140 (VIDVLICGSMVSSLCFLGAIAV) threads the bilayer. At 141–163 (DRYISIFYALRYHSVVTLPRAWR) the chain is on the cytoplasmic side. A helical membrane pass occupies residues 164 to 183 (IIAAIWVASILTSLLFITYY). The Extracellular segment spans residues 184–191 (NHTVVLLC). The chain crosses the membrane as a helical span at residues 192-211 (LVGFFIAMLALMAVLYVHML). The Cytoplasmic segment spans residues 212-240 (ARACQHARGIARLQKRQRPIHRGFGLKGA). Residues 241-266 (ATLTILLGVFFLCWGPFFLHLSLIVL) form a helical membrane-spanning segment. Topologically, residues 267-279 (CPQHPTCGCIFKN) are extracellular. Residues 280-300 (FNLFLALIICNAIVDPLIYAF) form a helical membrane-spanning segment. At 301–317 (RSQELRKTLQEVLQCSW) the chain is on the cytoplasmic side. Residue cysteine 315 is the site of S-palmitoyl cysteine attachment.

This sequence belongs to the G-protein coupled receptor 1 family. Interacts with MGRN1, but does not undergo MGRN1-mediated ubiquitination; this interaction competes with GNAS-binding and thus inhibits agonist-induced cAMP production. Interacts with OPN3; the interaction results in a decrease in MC1R-mediated cAMP signaling and ultimately a decrease in melanin production in melanocytes.

The protein localises to the cell membrane. Its function is as follows. Receptor for MSH (alpha, beta and gamma) and ACTH. The activity of this receptor is mediated by G proteins which activate adenylate cyclase. Mediates melanogenesis, the production of eumelanin (black/brown) and phaeomelanin (red/yellow), via regulation of cAMP signaling in melanocytes. The protein is Melanocyte-stimulating hormone receptor (MC1R) of Rangifer tarandus (Reindeer).